A 243-amino-acid polypeptide reads, in one-letter code: ATP synthase subunit a (243 aa).

Helical transmembrane passes span 28-48 (SSLYMVLTVVFASLFLFAGVF), 52-72 (VIPGPMQSFVEIVCSFVLGII), 83-103 (YFPLILSVFLYVLFANLVGML), 114-134 (HIVVTLALAMVVFIFVTLIGL), 141-161 (FFAMFLPDGTPNWIAPLMIFL), 177-197 (LTANMIAGHTILKVIAGFVYP), 200-220 (LLISPLSFLFVVVLIVFEVFI), and 221-241 (AMLQAYIFVMLTCVYLNDSLF).

The protein belongs to the ATPase A chain family. As to quaternary structure, F-type ATPases have 2 components, CF(1) - the catalytic core - and CF(0) - the membrane proton channel. CF(1) has five subunits: alpha(3), beta(3), gamma(1), delta(1), epsilon(1). CF(0) has three main subunits: a(1), b(2) and c(9-12). The alpha and beta chains form an alternating ring which encloses part of the gamma chain. CF(1) is attached to CF(0) by a central stalk formed by the gamma and epsilon chains, while a peripheral stalk is formed by the delta and b chains.

It localises to the cell inner membrane. Its function is as follows. Key component of the proton channel; it plays a direct role in the translocation of protons across the membrane. The chain is ATP synthase subunit a from Neorickettsia sennetsu (strain ATCC VR-367 / Miyayama) (Ehrlichia sennetsu).